A 221-amino-acid polypeptide reads, in one-letter code: Putative hemin import ATP-binding protein HrtA (221 aa).

One can recognise an ABC transporter domain in the interval 3–221; it reads LVVKDIVKNF…IELEDGKITD (219 aa). 39–46 is a binding site for ATP; sequence GASGSGKT.

This sequence belongs to the ABC transporter superfamily. HrtA family. In terms of assembly, the complex is composed of two ATP-binding proteins (HrtA), two transmembrane proteins (HrtB) and a solute-binding protein.

Its subcellular location is the cell membrane. Functionally, part of the ABC transporter complex hrt involved in hemin import. Responsible for energy coupling to the transport system. This is Putative hemin import ATP-binding protein HrtA (hrtA) from Staphylococcus aureus (strain Mu50 / ATCC 700699).